The primary structure comprises 694 residues: Elongation factor G (694 aa).

Positions 8 to 287 (EDYRNFGIMA…AVVEFLPAPT (280 aa)) constitute a tr-type G domain. Residues 17 to 24 (AHIDAGKT), 86 to 90 (DTPGH), and 140 to 143 (NKMD) each bind GTP.

This sequence belongs to the TRAFAC class translation factor GTPase superfamily. Classic translation factor GTPase family. EF-G/EF-2 subfamily.

It localises to the cytoplasm. Its function is as follows. Catalyzes the GTP-dependent ribosomal translocation step during translation elongation. During this step, the ribosome changes from the pre-translocational (PRE) to the post-translocational (POST) state as the newly formed A-site-bound peptidyl-tRNA and P-site-bound deacylated tRNA move to the P and E sites, respectively. Catalyzes the coordinated movement of the two tRNA molecules, the mRNA and conformational changes in the ribosome. The protein is Elongation factor G of Brucella melitensis biotype 1 (strain ATCC 23456 / CCUG 17765 / NCTC 10094 / 16M).